We begin with the raw amino-acid sequence, 474 residues long: Glutamate--tRNA ligase (474 aa).

The 'HIGH' region motif lies at 9–19 (PSPTGYLHVGG). The 'KMSKS' region motif lies at 240–244 (KLSKR). Lys-243 provides a ligand contact to ATP.

The protein belongs to the class-I aminoacyl-tRNA synthetase family. Glutamate--tRNA ligase type 1 subfamily. As to quaternary structure, monomer.

The protein localises to the cytoplasm. The catalysed reaction is tRNA(Glu) + L-glutamate + ATP = L-glutamyl-tRNA(Glu) + AMP + diphosphate. Its function is as follows. Catalyzes the attachment of glutamate to tRNA(Glu) in a two-step reaction: glutamate is first activated by ATP to form Glu-AMP and then transferred to the acceptor end of tRNA(Glu). This chain is Glutamate--tRNA ligase, found in Aliivibrio fischeri (strain MJ11) (Vibrio fischeri).